Reading from the N-terminus, the 62-residue chain is Photosystem II reaction center protein Z (62 aa).

The next 2 membrane-spanning stretches (helical) occupy residues 8-28 and 41-61; these read AVFA…VVFA and FSGT…NSLI.

The protein belongs to the PsbZ family. As to quaternary structure, PSII is composed of 1 copy each of membrane proteins PsbA, PsbB, PsbC, PsbD, PsbE, PsbF, PsbH, PsbI, PsbJ, PsbK, PsbL, PsbM, PsbT, PsbY, PsbZ, Psb30/Ycf12, at least 3 peripheral proteins of the oxygen-evolving complex and a large number of cofactors. It forms dimeric complexes.

The protein resides in the plastid. The protein localises to the chloroplast thylakoid membrane. In terms of biological role, may control the interaction of photosystem II (PSII) cores with the light-harvesting antenna, regulates electron flow through the 2 photosystem reaction centers. PSII is a light-driven water plastoquinone oxidoreductase, using light energy to abstract electrons from H(2)O, generating a proton gradient subsequently used for ATP formation. The chain is Photosystem II reaction center protein Z from Cucumis sativus (Cucumber).